We begin with the raw amino-acid sequence, 185 residues long: Large ribosomal subunit protein bL17 (185 aa).

Belongs to the bacterial ribosomal protein bL17 family. As to quaternary structure, part of the 50S ribosomal subunit. Contacts protein L32.

This Rhodococcus erythropolis (strain PR4 / NBRC 100887) protein is Large ribosomal subunit protein bL17.